A 1382-amino-acid polypeptide reads, in one-letter code: Histone-lysine N-methyltransferase SUVR5 (1382 aa).

2 disordered regions span residues 43 to 62 and 354 to 373; these read TVTG…SEPK and GNTN…NTPE. 3 consecutive C2H2-type zinc fingers follow at residues 735 to 758, 769 to 792, and 838 to 861; these read FACA…EERH, LQCI…QAVH, and FVCK…QAEH. The disordered stretch occupies residues 915 to 935; the sequence is RRMQGSKSLGTEGNTEAGVSP. Residues 919–928 are compositionally biased toward polar residues; the sequence is GSKSLGTEGN. Residues 1145 to 1221 enclose the Pre-SET domain; the sequence is LRCSCRSSVC…TCQNRVLQNG (77 aa). Zn(2+)-binding residues include cysteine 1147, cysteine 1149, cysteine 1154, cysteine 1159, cysteine 1182, cysteine 1203, cysteine 1207, cysteine 1209, and cysteine 1213. Positions 1224 to 1356 constitute an SET domain; the sequence is AKLEVFRTES…AGEEITRDYG (133 aa). Residues 1234 to 1236, tyrosine 1277, and 1313 to 1314 contribute to the S-adenosyl-L-methionine site; these read KGW and NH. Residue cysteine 1316 coordinates Zn(2+). Tyrosine 1355 serves as a coordination point for S-adenosyl-L-methionine. The Post-SET domain occupies 1366-1382; the sequence is NEHPCHCKATNCRGLLS. Positions 1370, 1372, and 1377 each coordinate Zn(2+).

It belongs to the class V-like SAM-binding methyltransferase superfamily. Component of a regulatory complex with LDL1/SWP1. Interacts with LDL1/SWP1.

Its subcellular location is the nucleus. It localises to the chromosome. The catalysed reaction is L-lysyl-[histone] + S-adenosyl-L-methionine = N(6)-methyl-L-lysyl-[histone] + S-adenosyl-L-homocysteine + H(+). In terms of biological role, histone methyltransferase that functions together with its binding partner LDL1/SWP1 as one of the regulators of flower timing in Arabidopsis. Mediates H3K9me2 deposition and regulates gene expression in a DNA methylation-independent manner. Binds DNA through its zinc fingers and represses the expression of a subset of stimulus response genes. May represent a novel mechanism for plants to regulate their chromatin and transcriptional state, which may allow for the adaptability and modulation necessary to rapidly respond to environment or developmental cues. The chain is Histone-lysine N-methyltransferase SUVR5 from Arabidopsis thaliana (Mouse-ear cress).